We begin with the raw amino-acid sequence, 205 residues long: Cytochrome c biogenesis ATP-binding export protein CcmA 2 (205 aa).

An ABC transporter domain is found at 2 to 205; the sequence is LEARDLYCER…LALTGGGAGL (204 aa). ATP is bound at residue 34–41; sequence GGNGAGKT.

Belongs to the ABC transporter superfamily. CcmA exporter (TC 3.A.1.107) family. As to quaternary structure, the complex is composed of two ATP-binding proteins (CcmA) and two transmembrane proteins (CcmB).

It is found in the cell inner membrane. The enzyme catalyses heme b(in) + ATP + H2O = heme b(out) + ADP + phosphate + H(+). Its function is as follows. Part of the ABC transporter complex CcmAB involved in the biogenesis of c-type cytochromes; once thought to export heme, this seems not to be the case, but its exact role is uncertain. Responsible for energy coupling to the transport system. This chain is Cytochrome c biogenesis ATP-binding export protein CcmA 2, found in Salmonella typhimurium (strain LT2 / SGSC1412 / ATCC 700720).